A 235-amino-acid polypeptide reads, in one-letter code: MKIIQVENQVEGGKVALELLKEKLAQGAKTLGLATGSSPEEFYKQIVESDLDFSEMTSVNLDEYVGLQEEDPQSYRYFMNQHLFNQKPFKASFLPNGAAKDLEAEVARYNQLLTEHPADLQILGIGTNGHIGFNEPGTSFDSQTHLVDLTPSTIQSNARFFDKMEDVPTQAISMGIGNILNAKSIILFAYGSAKAKAIAGTVEGEVTEELPGSALQKHPDVVIIADKEALSLLKH.

The active-site Proton acceptor; for enolization step is the Asp-62. The active-site For ring-opening step is Asn-128. Catalysis depends on His-130, which acts as the Proton acceptor; for ring-opening step. Glu-135 functions as the For ring-opening step in the catalytic mechanism.

It belongs to the glucosamine/galactosamine-6-phosphate isomerase family. NagB subfamily.

The enzyme catalyses alpha-D-glucosamine 6-phosphate + H2O = beta-D-fructose 6-phosphate + NH4(+). The protein operates within amino-sugar metabolism; N-acetylneuraminate degradation; D-fructose 6-phosphate from N-acetylneuraminate: step 5/5. In terms of biological role, catalyzes the reversible isomerization-deamination of glucosamine 6-phosphate (GlcN6P) to form fructose 6-phosphate (Fru6P) and ammonium ion. The chain is Glucosamine-6-phosphate deaminase from Streptococcus sanguinis (strain SK36).